A 125-amino-acid polypeptide reads, in one-letter code: Large ribosomal subunit protein uL30 (125 aa).

Residues 1–61 (MSKLKVKLLR…HLVGVAYRID (61 aa)) form a large ribosomal subunit protein uL30 region. Residues 62–125 (FSGDIPTVER…KNWKGEEVEL (64 aa)) are unknown.

The protein belongs to the universal ribosomal protein uL30 family. As to quaternary structure, part of the 50S ribosomal subunit.

The protein is Large ribosomal subunit protein uL30 of Aquifex aeolicus (strain VF5).